The chain runs to 130 residues: Small ribosomal subunit protein uS9 (130 aa).

The disordered stretch occupies residues 108-130; sequence PRMKERRKYGLKKARRAPQFSKR. Basic residues predominate over residues 111-130; sequence KERRKYGLKKARRAPQFSKR.

The protein belongs to the universal ribosomal protein uS9 family.

The chain is Small ribosomal subunit protein uS9 from Desulforamulus reducens (strain ATCC BAA-1160 / DSM 100696 / MI-1) (Desulfotomaculum reducens).